A 582-amino-acid chain; its full sequence is TRAF-type zinc finger domain-containing protein 1 (582 aa).

The residue at position 2 (A2) is an N-acetylalanine. A TRAF-type zinc finger spans residues 27-103 (IHEIHCQRNI…DLELSILKLK (77 aa)). Position 191 is a phosphoserine (S191). Residues 217-236 (EQERQERNRGQQPPKEGGEE) form a disordered region. 8 positions are modified to phosphoserine: S278, S320, S326, S327, S409, S415, S430, and S470. Residues 401–582 (TEGIPRLDSQ…AGDAEEEEEE (182 aa)) form a disordered region. Composition is skewed to polar residues over residues 454 to 471 (PINNMTATYNQLSRSTSG) and 486 to 495 (LSNSDSQDIQ).

Interacts with MAVS, TICAM1, TRAF1, TRAF2, TRAF3. Interacts with TRAF6.

In terms of biological role, negative feedback regulator that controls excessive innate immune responses. Regulates both Toll-like receptor 4 (TLR4) and DDX58/RIG1-like helicases (RLH) pathways. May inhibit the LTR pathway by direct interaction with TRAF6 and attenuation of NF-kappa-B activation. May negatively regulate the RLH pathway downstream from MAVS and upstream of NF-kappa-B and IRF3. The protein is TRAF-type zinc finger domain-containing protein 1 (TRAFD1) of Homo sapiens (Human).